The chain runs to 113 residues: 14 kDa zinc-binding protein (113 aa).

The HIT domain maps to 3–113; that stretch reads IFGKIISKEI…GGRQMNWPPG (111 aa). The Histidine triad motif motif lies at 97 to 101; sequence HIHVH.

Homodimer.

This is 14 kDa zinc-binding protein from Brassica juncea (Indian mustard).